The chain runs to 238 residues: Uridylate kinase (238 aa).

Lys-12 to Gly-15 contacts ATP. A UMP-binding site is contributed by Gly-54. Residues Gly-55 and Arg-59 each coordinate ATP. UMP-binding positions include Asp-74 and Thr-135–Thr-142. Residues Thr-162, Tyr-168, and Asp-171 each coordinate ATP.

It belongs to the UMP kinase family. As to quaternary structure, homohexamer.

It localises to the cytoplasm. It catalyses the reaction UMP + ATP = UDP + ADP. It participates in pyrimidine metabolism; CTP biosynthesis via de novo pathway; UDP from UMP (UMPK route): step 1/1. Inhibited by UTP. Its function is as follows. Catalyzes the reversible phosphorylation of UMP to UDP. The polypeptide is Uridylate kinase (Herminiimonas arsenicoxydans).